A 101-amino-acid polypeptide reads, in one-letter code: DNA-binding protein Fis (101 aa).

A DNA-binding region (H-T-H motif) is located at residues 77-96 (QTRAANMLGINRGTLRKKLK).

It belongs to the transcriptional regulatory Fis family. As to quaternary structure, homodimer.

Functionally, activates ribosomal RNA transcription. Plays a direct role in upstream activation of rRNA promoters. This is DNA-binding protein Fis from Shewanella loihica (strain ATCC BAA-1088 / PV-4).